A 400-amino-acid chain; its full sequence is Phosphoglycerate kinase (400 aa).

Residues 24 to 26, Arg39, 62 to 65, Arg123, and Arg156 each bind substrate; these read DFN and HLGK. ATP-binding positions include Lys207, Gly298, Glu329, and 356 to 359; that span reads GGDS.

It belongs to the phosphoglycerate kinase family. In terms of assembly, monomer.

Its subcellular location is the cytoplasm. The enzyme catalyses (2R)-3-phosphoglycerate + ATP = (2R)-3-phospho-glyceroyl phosphate + ADP. It participates in carbohydrate degradation; glycolysis; pyruvate from D-glyceraldehyde 3-phosphate: step 2/5. This is Phosphoglycerate kinase from Clostridioides difficile (strain 630) (Peptoclostridium difficile).